The primary structure comprises 595 residues: S-(+)-linalool synthase, chloroplastic (595 aa).

The N-terminal 46 residues, 1 to 46 (MVCHVFSSFSSSLIRVLEAPLLLPAASASSSSSSSPASRSGGRRRR), are a transit peptide targeting the chloroplast. The span at 27 to 40 (SASSSSSSSPASRS) shows a compositional bias: low complexity. A disordered region spans residues 27-54 (SASSSSSSSPASRSGGRRRRAAHVRPSP). (2E)-geranyl diphosphate-binding residues include arginine 309, aspartate 346, aspartate 350, arginine 487, and aspartate 490. Mg(2+)-binding residues include aspartate 346 and aspartate 350. Positions 346 to 350 (DDIFD) match the DDXXD motif motif. 3 residues coordinate Mg(2+): aspartate 490, serine 494, and glutamate 498.

It belongs to the terpene synthase family. Tpsb subfamily. Requires Mg(2+) as cofactor. The cofactor is Mn(2+).

It is found in the plastid. It localises to the chloroplast. It carries out the reaction (2E)-geranyl diphosphate + H2O = (S)-linalool + diphosphate. It functions in the pathway secondary metabolite biosynthesis; terpenoid biosynthesis. Functionally, involved in monoterpene (C10) biosynthesis. The major product is S-(+)-linalool. Linalool production is induced by jasmonate in response to pathogen attack, it possesses antibacterial activity and is important for resistance to the bacterial blight pathogen Xanthomonas oryzae pv. oryzae (Xoo). Plants over-expressing linalool synthase display enhanced resistance to Xoo. The sequence is that of S-(+)-linalool synthase, chloroplastic from Oryza sativa subsp. japonica (Rice).